We begin with the raw amino-acid sequence, 264 residues long: 3-methyl-2-oxobutanoate hydroxymethyltransferase (264 aa).

The Mg(2+) site is built by Asp45 and Asp84. 3-methyl-2-oxobutanoate is bound by residues 45–46, Asp84, and Lys112; that span reads DS. Position 114 (Glu114) interacts with Mg(2+). The Proton acceptor role is filled by Glu181.

It belongs to the PanB family. Homodecamer; pentamer of dimers. The cofactor is Mg(2+).

It localises to the cytoplasm. It carries out the reaction 3-methyl-2-oxobutanoate + (6R)-5,10-methylene-5,6,7,8-tetrahydrofolate + H2O = 2-dehydropantoate + (6S)-5,6,7,8-tetrahydrofolate. It functions in the pathway cofactor biosynthesis; (R)-pantothenate biosynthesis; (R)-pantoate from 3-methyl-2-oxobutanoate: step 1/2. Catalyzes the reversible reaction in which hydroxymethyl group from 5,10-methylenetetrahydrofolate is transferred onto alpha-ketoisovalerate to form ketopantoate. In Pseudoalteromonas translucida (strain TAC 125), this protein is 3-methyl-2-oxobutanoate hydroxymethyltransferase.